Consider the following 154-residue polypeptide: UPF0260 protein NTHI1811 (154 aa).

This sequence belongs to the UPF0260 family.

The polypeptide is UPF0260 protein NTHI1811 (Haemophilus influenzae (strain 86-028NP)).